Reading from the N-terminus, the 533-residue chain is Tyrosinase (533 aa).

The N-terminal stretch at 1 to 18 (MFLAVLYCLLWSFQISDG) is a signal peptide. Residues 19 to 476 (HFPRACASSK…YLEQASRIWP (458 aa)) lie on the Lumenal, melanosome side of the membrane. N-linked (GlcNAc...) asparagine glycans are attached at residues asparagine 86, asparagine 111, and asparagine 161. Residues histidine 180, histidine 202, and histidine 211 each contribute to the Cu cation site. Asparagine 230 and asparagine 337 each carry an N-linked (GlcNAc...) asparagine glycan. 2 residues coordinate Cu cation: histidine 363 and histidine 367. An N-linked (GlcNAc...) asparagine glycan is attached at asparagine 371. A Cu cation-binding site is contributed by histidine 390. A helical membrane pass occupies residues 477–497 (WLLGAALVGAVIAAALSGLSS). Over 498–533 (RLCLQKKKKKKQPQEERQPLLMDKDDYHSLLYQSHL) the chain is Cytoplasmic.

It belongs to the tyrosinase family. As to quaternary structure, forms an OPN3-dependent complex with DCT in response to blue light in melanocytes. Cu(2+) is required as a cofactor. In terms of processing, glycosylated. In terms of tissue distribution, expressed in the skin.

The protein localises to the melanosome membrane. It localises to the melanosome. It catalyses the reaction 2 L-dopa + O2 = 2 L-dopaquinone + 2 H2O. The catalysed reaction is L-tyrosine + O2 = L-dopaquinone + H2O. The enzyme catalyses 2 5,6-dihydroxyindole-2-carboxylate + O2 = 2 indole-5,6-quinone-2-carboxylate + 2 H2O. Its function is as follows. This is a copper-containing oxidase that functions in the formation of pigments such as melanins and other polyphenolic compounds. Catalyzes the initial and rate limiting step in the cascade of reactions leading to melanin production from tyrosine. In addition to hydroxylating tyrosine to DOPA (3,4-dihydroxyphenylalanine), also catalyzes the oxidation of DOPA to DOPA-quinone, and possibly the oxidation of DHI (5,6-dihydroxyindole) to indole-5,6 quinone. The protein is Tyrosinase (Tyr) of Mus musculus (Mouse).